A 139-amino-acid chain; its full sequence is Nucleoside diphosphate kinase (139 aa).

The ATP site is built by Lys11, Phe59, Arg87, Thr93, Arg104, and Asn114. Residue His117 is the Pros-phosphohistidine intermediate of the active site.

It belongs to the NDK family. As to quaternary structure, homotetramer. It depends on Mg(2+) as a cofactor.

The protein localises to the cytoplasm. The enzyme catalyses a 2'-deoxyribonucleoside 5'-diphosphate + ATP = a 2'-deoxyribonucleoside 5'-triphosphate + ADP. The catalysed reaction is a ribonucleoside 5'-diphosphate + ATP = a ribonucleoside 5'-triphosphate + ADP. In terms of biological role, major role in the synthesis of nucleoside triphosphates other than ATP. The ATP gamma phosphate is transferred to the NDP beta phosphate via a ping-pong mechanism, using a phosphorylated active-site intermediate. This is Nucleoside diphosphate kinase from Pasteurella multocida (strain Pm70).